We begin with the raw amino-acid sequence, 48 residues long: ATP synthase protein 8 (48 aa).

A helical membrane pass occupies residues 16–36; it reads GFLLMTILLVLFSQFFLPMIL.

Belongs to the ATPase protein 8 family. In terms of assembly, F-type ATPases have 2 components, CF(1) - the catalytic core - and CF(0) - the membrane proton channel.

The protein localises to the mitochondrion membrane. In terms of biological role, mitochondrial membrane ATP synthase (F(1)F(0) ATP synthase or Complex V) produces ATP from ADP in the presence of a proton gradient across the membrane which is generated by electron transport complexes of the respiratory chain. F-type ATPases consist of two structural domains, F(1) - containing the extramembraneous catalytic core and F(0) - containing the membrane proton channel, linked together by a central stalk and a peripheral stalk. During catalysis, ATP synthesis in the catalytic domain of F(1) is coupled via a rotary mechanism of the central stalk subunits to proton translocation. Part of the complex F(0) domain. Minor subunit located with subunit a in the membrane. The polypeptide is ATP synthase protein 8 (ATP8) (Vanderwaltozyma polyspora (strain ATCC 22028 / DSM 70294 / BCRC 21397 / CBS 2163 / NBRC 10782 / NRRL Y-8283 / UCD 57-17) (Kluyveromyces polysporus)).